Consider the following 445-residue polypeptide: Acyl-CoA Delta-4 desaturase (445 aa).

Residues 19-96 enclose the Cytochrome b5 heme-binding domain; sequence AGVYTWEEVQ…MKPLLVGELA (78 aa). Transmembrane regions (helical) follow at residues 132-152, 153-173, 266-286, and 307-327; these read LFFLLHLGHILLLEALALLMV, WHWGTGWLQTLLCAVMLATAQ, YFFLVAPPLLIPVFYNYNIMM, and YMLCYVPVYGLFGSLALMMFA.

The protein belongs to the fatty acid desaturase type 1 family.

Its subcellular location is the membrane. The enzyme catalyses (8Z,11Z,14Z,17Z)-eicosatetraenoyl-CoA + 2 Fe(II)-[cytochrome b5] + O2 + 2 H(+) = (5Z,8Z,11Z,14Z,17Z)-eicosapentaenoyl-CoA + 2 Fe(III)-[cytochrome b5] + 2 H2O. It carries out the reaction (7Z,10Z,13Z,16Z)-docosatetraenoyl-CoA + 2 Fe(II)-[cytochrome b5] + O2 + 2 H(+) = (4Z,7Z,10Z,13Z,16Z)-docosapentaenoyl-CoA + 2 Fe(III)-[cytochrome b5] + 2 H2O. The catalysed reaction is (7Z,10Z,13Z,16Z,19Z)-docosapentaenoyl-CoA + 2 Fe(II)-[cytochrome b5] + O2 + 2 H(+) = (4Z,7Z,10Z,13Z,16Z,19Z)-docosahexaenoyl-CoA + 2 Fe(III)-[cytochrome b5] + 2 H2O. It functions in the pathway lipid metabolism; polyunsaturated fatty acid biosynthesis. Functionally, fatty acid desaturase with bifunctional delta-4 and delta-5 activities. Component of a lipid metabolic pathway that catalyzes the biosynthesis of polyunsaturated fatty acids (PUFA) with preference toward n-3 substrates and Delta(4)function. The polypeptide is Acyl-CoA Delta-4 desaturase (Siganus canaliculatus (White-spotted spinefoot)).